Here is a 209-residue protein sequence, read N- to C-terminus: MVEQSDTMKGTTTVGIVFETGVVLASEKRATMGYLISNKTAKKIYQIAPRIGLTTAGGVGDAQQLARLMTVEANLYEIRRGKRISVQAASTLLSNILHGNRMFPFYVQLLIGGVDETGPVLFSVDAVGGTGKEDGIVATGSGSPMAYGVLEDRYTLGMDERSAIELAIRALRSAIKRDAGSGEGVAVVVITEDSYHELSDEEISVLTPN.

The propeptide at 1–10 (MVEQSDTMKG) is removed in mature form; by autocatalysis. T11 serves as the catalytic Nucleophile.

Belongs to the peptidase T1B family. As to quaternary structure, the 20S proteasome core is composed of 14 alpha and 14 beta subunits that assemble into four stacked heptameric rings, resulting in a barrel-shaped structure. The two inner rings, each composed of seven catalytic beta subunits, are sandwiched by two outer rings, each composed of seven alpha subunits. The catalytic chamber with the active sites is on the inside of the barrel. Has a gated structure, the ends of the cylinder being occluded by the N-termini of the alpha-subunits. Is capped at one or both ends by the proteasome regulatory ATPase, PAN.

The protein localises to the cytoplasm. The catalysed reaction is Cleavage of peptide bonds with very broad specificity.. With respect to regulation, the formation of the proteasomal ATPase PAN-20S proteasome complex, via the docking of the C-termini of PAN into the intersubunit pockets in the alpha-rings, triggers opening of the gate for substrate entry. Interconversion between the open-gate and close-gate conformations leads to a dynamic regulation of the 20S proteasome proteolysis activity. Functionally, component of the proteasome core, a large protease complex with broad specificity involved in protein degradation. This Methanospirillum hungatei JF-1 (strain ATCC 27890 / DSM 864 / NBRC 100397 / JF-1) protein is Proteasome subunit beta.